Reading from the N-terminus, the 1392-residue chain is MKRLLAAAGKGVRGPEPPNPFSERVYTEKDYGTIYFGDLGKIHTAASRGQVQKLEKMTVGKKPVNLNKRDMKKRTALHWACVNGHAEVVTFLVDRKCQLNVLDGEGRTPLMKALQCEREACANILIDAGADLNYVDVYGNTALHYAVYSENLLMVATLLSYGAVIEVQNKASLTPLLLAIQKRSKQTVEFLLTKNANANAFNESKCTALMLAICEGSSEIVGMLLQQNVDVFAEDIHGITAERYAAACGVNYIHQQLLEHIRKLPKNPQNTNPEGTSTGTPDEAAPLAERTPDTAESLLEKTPDEAARLVEGTSAKIQCLGKATSGKFEQSTEETPRKILRPTKETSEKFSWPAKERSRKITWEEKETSVKTECVAGVTPNKTEVLEKGTSNMIACPTKETSTKASTNVDVSSVEPIFSLFGTRTIENSQCTKVEEDFNLATKIISKSAAQNYTCLPDATYQKDIKTINHKIEDQMFPSESKREEDEEYSWDSGSLFESSAKTQVCIPESMYQKVMEINREVEELPEKPSAFKPAVEMQKTVPNKAFELKNEQTLRAAQMFPSESKQKDDEENSWDSESPCETVSQKDVYLPKATHQKEFDTLSGKLEESPVKDGLLKPTCGRKVSLPNKALELKDRETFKAESPDKDGLLKPTCGRKVSLPNKALELKDRETLKAESPDNDGLLKPTCGRKVSLPNKALELKDRETFKAAQMFPSESKQKDDEENSWDFESFLETLLQNDVCLPKATHQKEFDTLSGKLEESPDKDGLLKPTCGMKISLPNKALELKDRETFKAEDVSSVESTFSLFGKPTTENSQSTKVEEDFNLTTKEGATKTVTGQQERDIGIIERAPQDQTNKMPTSELGRKEDTKSTSDSEIISVSDTQNYECLPEATYQKEIKTTNGKIEESPEKPSHFEPATEMQNSVPNKGLEWKNKQTLRADSTTLSKILDALPSCERGRELKKDNCEQITAKMEQTKNKFCVLQKELSEAKEIKSQLENQKAKWEQELCSVRLTLNQEEEKRRNVDILKEKIRPEEQLRKKLEVKQQLEQTLRIQDIELKSVTSNLNQVSHTHESENDLFHENCMLKKEIAMLKLEVATLKHQHQVKENKYFEDIKILQEKNAELQMTLKLKQKTVTKRASQYREQLKVLTAENTMLTSKLKEKQDKEILETEIESHHPRLASALQDHDQSVTSRKNQELAFHSAGDAPLQGIMNVDVSNTIYNNEVLHQPLYEAQRKSKSPKINLNYAGDDLRENALVSEHAQRDRCETQCQMKKAEHMYQNEQDNVDKHTEQQESLEQKLFQLESKNRWLRQQLVYAHKKVNKSKVTINIQFPEMKMQRHLNEKNEEVFNYGNHLKERIDQYEKEKAEREVSIKKYKYFSNFLKESGLG.

The interval 1–21 (MKRLLAAAGKGVRGPEPPNPF) is disordered. 5 ANK repeats span residues 72–101 (KKRTALHWACVNGHAEVVTFLVDRKCQLNV), 105–134 (EGRTPLMKALQCEREACANILIDAGADLNY), 138–167 (YGNTALHYAVYSENLLMVATLLSYGAVIEV), 171–200 (ASLTPLLLAIQKRSKQTVEFLLTKNANANA), and 204–233 (SKCTALMLAICEGSSEIVGMLLQQNVDVFA). Disordered stretches follow at residues 265–292 (PKNPQNTNPEGTSTGTPDEAAPLAERTP), 558–587 (AQMFPSESKQKDDEENSWDSESPCETVSQK), 636–656 (DRETFKAESPDKDGLLKPTCG), 671–690 (RETLKAESPDNDGLLKPTCG), 830–877 (KEGA…SDSE), and 904–926 (GKIEESPEKPSHFEPATEMQNSV). 2 stretches are compositionally biased toward polar residues: residues 267 to 280 (NPQNTNPEGTSTGT) and 576 to 586 (DSESPCETVSQ). Positions 636 to 650 (DRETFKAESPDKDGL) are enriched in basic and acidic residues. Residues 830-840 (KEGATKTVTGQ) show a composition bias toward polar residues. Basic and acidic residues-rich tracts occupy residues 864 to 874 (LGRKEDTKSTS) and 904 to 915 (GKIEESPEKPSH). Coiled-coil stretches lie at residues 960 to 1168 (RELK…KQDK) and 1270 to 1318 (ETQC…QQLV).

Expressed in brain, breast and testis.

In Homo sapiens (Human), this protein is Ankyrin repeat domain-containing protein 30B (ANKRD30B).